Consider the following 417-residue polypeptide: Cotranscriptional regulator ARB2A (417 aa).

An N-terminal signal peptide occupies residues 1–18 (MSISLSSLIFLPIWINMA). Asn26 carries N-linked (GlcNAc...) asparagine glycosylation. The segment at 208–248 (KQKMHKQSSSSDGTDEPAGKRERRDKVSKETKKRRDFYEKY) is disordered. The span at 224 to 237 (PAGKRERRDKVSKE) shows a compositional bias: basic and acidic residues. Ser294 acts as the Nucleophile in catalysis. The disordered stretch occupies residues 398–417 (SSSQKPALTRRSHRIKHEEL). The segment covering 405–417 (LTRRSHRIKHEEL) has biased composition (basic residues). The short motif at 414–417 (HEEL) is the Prevents secretion from ER element.

It belongs to the ARB2A family. Interacts with AGO2. Found in a complex, composed of AGO2, CHD7 and ARB2A.

The protein resides in the nucleus. It localises to the cytoplasm. The protein localises to the endoplasmic reticulum. In terms of biological role, plays a role in the regulation of alternative splicing, by interacting with AGO2 and CHD7. Seems to be required for stabilizing protein-protein interactions at the chromatin-spliceosome interface. May have hydrolase activity. In Mus musculus (Mouse), this protein is Cotranscriptional regulator ARB2A (Arb2a).